Here is a 403-residue protein sequence, read N- to C-terminus: Casein kinase I isoform delta-A (403 aa).

Residues 9-277 form the Protein kinase domain; that stretch reads YRLGRKIGSG…YLRQLFRNLF (269 aa). ATP contacts are provided by residues 15-23 and K38; that span reads IGSGSFGDI. D128 (proton acceptor) is an active-site residue. Positions 315-340 are autoinhibitory; the sequence is QGRIPLPRVMLPTSSGRPRGTQEVAP. The interval 322-403 is disordered; it reads RVMLPTSSGR…PSGLQSAVPR (82 aa).

This sequence belongs to the protein kinase superfamily. Monomer. Interacts with per1 and per2. Component of the circadian core oscillator. Post-translationally, autophosphorylated on serine and threonine residues.

The protein localises to the cytoplasm. It is found in the nucleus. It carries out the reaction L-seryl-[protein] + ATP = O-phospho-L-seryl-[protein] + ADP + H(+). It catalyses the reaction L-threonyl-[protein] + ATP = O-phospho-L-threonyl-[protein] + ADP + H(+). Its activity is regulated as follows. Exhibits substrate-dependent heparin activation. Functionally, casein kinases are operationally defined by their preferential utilization of acidic proteins such as caseins as substrates. Central component of the circadian clock. May act as a negative regulator of circadian rhythmicity by phosphorylating per1 and per2, which may lead to their degradation. Participates in wnt signaling. The polypeptide is Casein kinase I isoform delta-A (csnk1da) (Danio rerio (Zebrafish)).